Reading from the N-terminus, the 372-residue chain is 4-hydroxy-3-methylbut-2-en-1-yl diphosphate synthase (flavodoxin) (372 aa).

C270, C273, C305, and E312 together coordinate [4Fe-4S] cluster.

Belongs to the IspG family. [4Fe-4S] cluster serves as cofactor.

It catalyses the reaction (2E)-4-hydroxy-3-methylbut-2-enyl diphosphate + oxidized [flavodoxin] + H2O + 2 H(+) = 2-C-methyl-D-erythritol 2,4-cyclic diphosphate + reduced [flavodoxin]. Its pathway is isoprenoid biosynthesis; isopentenyl diphosphate biosynthesis via DXP pathway; isopentenyl diphosphate from 1-deoxy-D-xylulose 5-phosphate: step 5/6. Its function is as follows. Converts 2C-methyl-D-erythritol 2,4-cyclodiphosphate (ME-2,4cPP) into 1-hydroxy-2-methyl-2-(E)-butenyl 4-diphosphate. This chain is 4-hydroxy-3-methylbut-2-en-1-yl diphosphate synthase (flavodoxin), found in Idiomarina loihiensis (strain ATCC BAA-735 / DSM 15497 / L2-TR).